A 331-amino-acid polypeptide reads, in one-letter code: MATYKDAGVNIEEGYKAVSLMKNYAAKTFTKGVINDLGSFAGMFELSGYKTPVLVSGTDGVGTKLKIAFDMKKYDTVGIDCVAMCVNDILCHGAKPLFFLDYIACGKLEAENAADLVRGVSDGCIDAGCSLIGGETAEMPGFYKEGEYDVAGFCVGVVEKDEIIDGSKIENGDVLIGIESTGIHSNGYSLVRKLIKDFNEDFNGEKIGNVLLTPTKIYVKTVLELIKKYNIHGMAHITGGGFYENIPRMFKGDFTAVINKGSFKVPEIFNHIMSLGVEEEHMYNTFNMGIGYVLCVKEEDAENIIRYIEKMGSKAYKIGHVEAGGHGVCLK.

This sequence belongs to the AIR synthase family.

Its subcellular location is the cytoplasm. It carries out the reaction 2-formamido-N(1)-(5-O-phospho-beta-D-ribosyl)acetamidine + ATP = 5-amino-1-(5-phospho-beta-D-ribosyl)imidazole + ADP + phosphate + H(+). It functions in the pathway purine metabolism; IMP biosynthesis via de novo pathway; 5-amino-1-(5-phospho-D-ribosyl)imidazole from N(2)-formyl-N(1)-(5-phospho-D-ribosyl)glycinamide: step 2/2. This Clostridium novyi (strain NT) protein is Phosphoribosylformylglycinamidine cyclo-ligase.